Consider the following 244-residue polypeptide: Protein crossbronx (244 aa).

The UBC core domain occupies 20 to 176 (QQEYKILAEY…VQENIKESKE (157 aa)). Positions 209–244 (AGRSKQTEPSAQQGNGGHATGLSWVKEGEFKPLSIE) are disordered.

It belongs to the ubiquitin-conjugating enzyme family. FTS subfamily.

The chain is Protein crossbronx (cbx) from Drosophila simulans (Fruit fly).